The following is a 344-amino-acid chain: MKERLYELKRQALEQIGQARDLKALNDVRVAYLGKKGPITEVLRGMGALPPEERPKIGALANEVREAIQQALEAKQAKLEQEEVERKLAAEAIDVTLPGRPVSLGNPHPLTRVIEEIEDLFIGMGYTVAEGPEVETDYYNFEALNLPKGHPARDMQDSFYITEEILLRTHTSPMQARTMEKHRGRGPVKIICPGKVYRRDTDDATHSHQFTQIEGLVVDRNIRMSDLKGTLREFARKLFGEGRDIRFRPSFFPFTEPSVEVDVSCFRCEGRGCGVCKGTGWIEILGAGMVHPNVLEMAGFDSKTYTGFAFGMGPERIAMLKYGIDDIRHFYQNDLRFLRQFLRV.

A Mg(2+)-binding site is contributed by Glu256.

The protein belongs to the class-II aminoacyl-tRNA synthetase family. Phe-tRNA synthetase alpha subunit type 1 subfamily. As to quaternary structure, tetramer of two alpha and two beta subunits. Mg(2+) serves as cofactor.

The protein localises to the cytoplasm. It catalyses the reaction tRNA(Phe) + L-phenylalanine + ATP = L-phenylalanyl-tRNA(Phe) + AMP + diphosphate + H(+). The polypeptide is Phenylalanine--tRNA ligase alpha subunit (Geobacillus kaustophilus (strain HTA426)).